A 124-amino-acid polypeptide reads, in one-letter code: MATVNQLVRKPRSPKVIKTNVPALNACPQKRGVCTRVYTTTPKKPNSALRKVARVRLTNGFEVTSYIGGEGHNLQEHSVILIRGGRVKDLPGVRYHTVRGALDCAGVSERRQGRSKYGAKRPKS.

The residue at position 89 (Asp89) is a 3-methylthioaspartic acid.

This sequence belongs to the universal ribosomal protein uS12 family. As to quaternary structure, part of the 30S ribosomal subunit. Contacts proteins S8 and S17. May interact with IF1 in the 30S initiation complex.

In terms of biological role, with S4 and S5 plays an important role in translational accuracy. Its function is as follows. Interacts with and stabilizes bases of the 16S rRNA that are involved in tRNA selection in the A site and with the mRNA backbone. Located at the interface of the 30S and 50S subunits, it traverses the body of the 30S subunit contacting proteins on the other side and probably holding the rRNA structure together. The combined cluster of proteins S8, S12 and S17 appears to hold together the shoulder and platform of the 30S subunit. This is Small ribosomal subunit protein uS12 from Shewanella loihica (strain ATCC BAA-1088 / PV-4).